A 397-amino-acid chain; its full sequence is Tryptophan synthase beta chain (397 aa).

The residue at position 87 (Lys87) is an N6-(pyridoxal phosphate)lysine.

This sequence belongs to the TrpB family. As to quaternary structure, tetramer of two alpha and two beta chains. Pyridoxal 5'-phosphate serves as cofactor.

It carries out the reaction (1S,2R)-1-C-(indol-3-yl)glycerol 3-phosphate + L-serine = D-glyceraldehyde 3-phosphate + L-tryptophan + H2O. The protein operates within amino-acid biosynthesis; L-tryptophan biosynthesis; L-tryptophan from chorismate: step 5/5. In terms of biological role, the beta subunit is responsible for the synthesis of L-tryptophan from indole and L-serine. The polypeptide is Tryptophan synthase beta chain (Salmonella choleraesuis (strain SC-B67)).